The chain runs to 106 residues: Iron-sulfur cluster assembly protein CyaY (106 aa).

The protein belongs to the frataxin family.

Its function is as follows. Involved in iron-sulfur (Fe-S) cluster assembly. May act as a regulator of Fe-S biogenesis. The polypeptide is Iron-sulfur cluster assembly protein CyaY (Salmonella typhimurium (strain LT2 / SGSC1412 / ATCC 700720)).